Here is a 630-residue protein sequence, read N- to C-terminus: Neuronal acetylcholine receptor subunit alpha-4 (630 aa).

The signal sequence occupies residues 1–30 (MANSGTGAPPPLLLLPLLLLLGTGLLPASS). The Extracellular portion of the chain corresponds to 32–249 (IETRAHAEER…IIRRLPLFYT (218 aa)). Asparagine 59 carries an N-linked (GlcNAc...) asparagine glycan. Ca(2+) contacts are provided by valine 78 and glutamate 80. N-linked (GlcNAc...) asparagine glycans are attached at residues asparagine 109 and asparagine 176. Intrachain disulfides connect cysteine 163–cysteine 177 and cysteine 227–cysteine 228. A helical transmembrane segment spans residues 250–270 (INLIIPCLLISCLTVLVFYLP). Cysteine 273 is lipidated: S-palmitoyl cysteine. The next 2 helical transmembrane spans lie at 279-299 (LCIS…EIIP) and 313-333 (LLFT…VLNV). Residues 334–604 (HHRSPRTHTM…WKYVAMVIDR (271 aa)) are Cytoplasmic-facing. Disordered regions lie at residues 418–463 (TAVE…SGAP) and 505–526 (SLAD…SQLP). Serine 428 carries the phosphoserine modification. Positions 434 to 443 (PDLKTSEVEK) are enriched in basic and acidic residues. The segment covering 447–457 (CPSPGSCPPPK) has biased composition (pro residues). Phosphoserine is present on residues serine 542 and serine 545. Residues 605–625 (IFLWMFIIVCLLGTVGLFLPP) traverse the membrane as a helical segment.

It belongs to the ligand-gated ion channel (TC 1.A.9) family. Acetylcholine receptor (TC 1.A.9.1) subfamily. Alpha-4/CHRNA4 sub-subfamily. Neuronal AChR is composed of two different types of subunits: alpha and beta. CHRNA4 forms heteropentameric neuronal acetylcholine receptors with CHRNB2 and CHRNB4, as well as CHRNA5 and CHRNB3 as accesory subunits. Found in two major stoichiometric forms, LS (low agonist sensitivity): (CHRNA4)3:(CHRNB2)2 and HS (high agonist sensitivity): (CHRNA4)2:(CHRNB2)3, the two stoichiometric forms differ in their unitary conductance, calcium permeability, ACh sensitivity and potentiation by divalent cation. Cells produce predominantly an (CHRNA4)3:(CHRNB2)2 nAChR. The (CHRNA4)2:(CHRNB2)3 expression is selectively up-regulated by nicotine and has lower single channel conductance and calcium permeability. In the striatum, also forms CHRNA4:CHRNA6:CHRNB2 complexes. Also found in the stoichiometric form: (CHRNA4:CHRNB2)2:CHRNB3. Interacts with RIC3; which is required for proper folding and assembly. Interacts with LYPD6. As to expression, in various regions of the central nervous system. Expressed in hippocampal neurons.

It is found in the presynaptic cell membrane. It localises to the cell membrane. The enzyme catalyses Ca(2+)(in) = Ca(2+)(out). It carries out the reaction K(+)(in) = K(+)(out). The catalysed reaction is Na(+)(in) = Na(+)(out). Its activity is regulated as follows. Activated by a myriad of ligands such as acetylcholine, cytisine, nicotine, choline and epibatidine. Channel potentiation by calcium is stoichiometry-selective, CHRNA4:CHRNB2 nACh receptor is achieved by calcium association with topographically distinct sites framed by anionic residues within the CHRNA4 subunit and between the CHRNA4 and CHRNB2 subunits. nAChR activity is inhibited by the antagonist alpha-conotoxins BuIA, PnIA, GID and MII, small disulfide-constrained peptides from cone snails. Its function is as follows. Component of neuronal acetylcholine receptors (nAChRs) that function as pentameric, ligand-gated cation channels with high calcium permeability among other activities. nAChRs are excitatory neurotrasnmitter receptors formed by a collection of nAChR subunits known to mediate synaptic transmission in the nervous system and the neuromuscular junction. Each nAchR subunit confers differential attributes to channel properties, including activation, deactivation and desensitization kinetics, pH sensitivity, cation permeability, and binding to allosteric modulators. CHRNA4 forms heteropentameric neuronal acetylcholine receptors with CHRNB2 and CHRNB4, as well as CHRNA5 and CHRNB3 as accesory subunits. Is the most abundant nAChR subtype expressed in the central nervous system. Found in two major stoichiometric forms,(CHRNA4)3:(CHRNB2)2 and (CHRNA4)2:(CHRNB2)3, the two stoichiometric forms differ in their unitary conductance, calcium permeability, ACh sensitivity and potentiation by divalent cation. Involved in the modulation of calcium-dependent signaling pathways, influences the release of neurotransmitters, including dopamine, glutamate and GABA. The polypeptide is Neuronal acetylcholine receptor subunit alpha-4 (Chrna4) (Rattus norvegicus (Rat)).